The following is a 719-amino-acid chain: Fatty acid oxidation complex subunit alpha (719 aa).

Positions 1–190 (MIYQGNRITV…KLGLVDAVVA (190 aa)) are enoyl-CoA hydratase/isomerase. Asp-298 contacts substrate. Positions 313–719 (HDINEAAVLG…AAGETFYPKA (407 aa)) are 3-hydroxyacyl-CoA dehydrogenase. Residues Met-326, Asp-345, 402–404 (VVE), Lys-409, and Ser-431 each bind NAD(+). Catalysis depends on His-452, which acts as the For 3-hydroxyacyl-CoA dehydrogenase activity. Asn-455 is an NAD(+) binding site. Asn-502 provides a ligand contact to substrate.

This sequence in the N-terminal section; belongs to the enoyl-CoA hydratase/isomerase family. The protein in the C-terminal section; belongs to the 3-hydroxyacyl-CoA dehydrogenase family. Heterotetramer of two alpha chains (FadB) and two beta chains (FadA).

The enzyme catalyses a (3S)-3-hydroxyacyl-CoA + NAD(+) = a 3-oxoacyl-CoA + NADH + H(+). The catalysed reaction is a (3S)-3-hydroxyacyl-CoA = a (2E)-enoyl-CoA + H2O. It catalyses the reaction a 4-saturated-(3S)-3-hydroxyacyl-CoA = a (3E)-enoyl-CoA + H2O. It carries out the reaction (3S)-3-hydroxybutanoyl-CoA = (3R)-3-hydroxybutanoyl-CoA. The enzyme catalyses a (3Z)-enoyl-CoA = a 4-saturated (2E)-enoyl-CoA. The catalysed reaction is a (3E)-enoyl-CoA = a 4-saturated (2E)-enoyl-CoA. The protein operates within lipid metabolism; fatty acid beta-oxidation. Functionally, involved in the aerobic and anaerobic degradation of long-chain fatty acids via beta-oxidation cycle. Catalyzes the formation of 3-oxoacyl-CoA from enoyl-CoA via L-3-hydroxyacyl-CoA. It can also use D-3-hydroxyacyl-CoA and cis-3-enoyl-CoA as substrate. The polypeptide is Fatty acid oxidation complex subunit alpha (Psychrobacter sp. (strain PRwf-1)).